The chain runs to 408 residues: MKDKVVLAYSGGLDTTAIIPWLKETYDYDVICCCINCGQGEELDGLDERAKLSGASKLYIEDICDEFSEDYIVPCVQAGAVYEHKYLLGTAMARPGIAKKLVEIARKEGAVAICHGATGKGNDQIRFELGIKALAPDIKVIAPWRQDNWKMDSREAEIEYCKAHGIDLPFGTDSSYSRDRNLWHISHEGLELEDPSQEPNYDHLLVLSVTPEHAPDEGEYVTMTFEKGVPTSVNGKKMKVADIIRELNRLGGKHGIGIIDIVENRVVGMKSRGVYETPGGTILMEAHDQLEELCLDRATMEVKKEMGNKLAQVVYEGKWFTPLREAIQAFVESTQEYVTGEVKFKLYKGNIIKAGTTSPYSLYSESLASFTTGDLYDHHDADGFITLFGLPLKVRAMKLLELENKKNN.

8-16 (AYSGGLDTT) contributes to the ATP binding site. Tyr86 is a binding site for L-citrulline. Gly116 serves as a coordination point for ATP. L-aspartate is bound by residues Thr118, Asn122, and Asp123. Position 122 (Asn122) interacts with L-citrulline. L-citrulline is bound by residues Arg126, Ser177, Ser186, Glu263, and Tyr275.

Belongs to the argininosuccinate synthase family. Type 1 subfamily. As to quaternary structure, homotetramer.

The protein resides in the cytoplasm. It carries out the reaction L-citrulline + L-aspartate + ATP = 2-(N(omega)-L-arginino)succinate + AMP + diphosphate + H(+). It functions in the pathway amino-acid biosynthesis; L-arginine biosynthesis; L-arginine from L-ornithine and carbamoyl phosphate: step 2/3. The chain is Argininosuccinate synthase from Agathobacter rectalis (strain ATCC 33656 / DSM 3377 / JCM 17463 / KCTC 5835 / VPI 0990) (Eubacterium rectale).